Consider the following 388-residue polypeptide: Protein phosphatase 2C 57 (388 aa).

Residues 59 to 348 (RWGYTSVQGF…DNISIIIADL (290 aa)) enclose the PPM-type phosphatase domain. D93, G94, D296, and D339 together coordinate Mn(2+). A helical transmembrane segment spans residues 363 to 383 (VVVELVQAATTIGLVTVGIWM).

The protein belongs to the PP2C family. It depends on Mg(2+) as a cofactor. Mn(2+) serves as cofactor.

Its subcellular location is the membrane. The protein resides in the plastid. It is found in the chloroplast stroma. It catalyses the reaction O-phospho-L-seryl-[protein] + H2O = L-seryl-[protein] + phosphate. The enzyme catalyses O-phospho-L-threonyl-[protein] + H2O = L-threonyl-[protein] + phosphate. In terms of biological role, protein phosphatase specifically required for efficient dephosphorylation of the light-harvesting complex II outer antennae (LCHII) and transition from state 2 to state 1. State transition plays a central role in response to environmental changes and allows to adjust to changing light conditions via the redistribution of light excitation energy between photosystem II (PSII) and photosystem I (PSI) in a short time by relocating LHCII proteins. Mainly responsible for the dephosphorylation of Lhcb1 and Lhcb2 but not of the photosystem II core proteins. The protein is Protein phosphatase 2C 57 of Arabidopsis thaliana (Mouse-ear cress).